The following is a 317-amino-acid chain: Melanocyte-stimulating hormone receptor (317 aa).

Residues 1–37 are Extracellular-facing; the sequence is MPVLGSQRRLLGSLNCTPPATFPLMLAPNRTGPQCLE. Asn29 is a glycosylation site (N-linked (GlcNAc...) asparagine). The chain crosses the membrane as a helical span at residues 38–63; it reads VSIPNGLFLSLGLVSLVENVLVVAAI. Over 64–72 the chain is Cytoplasmic; the sequence is AKNSNLHSP. Residues 73 to 93 form a helical membrane-spanning segment; that stretch reads MYYFICCLAVSDLLVSVSNVL. At 94 to 118 the chain is on the extracellular side; that stretch reads ETAVMLLLEAGALAARAAVVQQLDN. Residues 119-140 form a helical membrane-spanning segment; sequence VIDVLICGSMVSSLCFLGAIAV. The Cytoplasmic segment spans residues 141-163; that stretch reads DRYISIFYALRYHSVVTLPRAWR. The chain crosses the membrane as a helical span at residues 164 to 183; the sequence is IIAAIWVASILTSLLFITYY. Residues 184-191 lie on the Extracellular side of the membrane; the sequence is NHTVVLLC. Residues 192–211 traverse the membrane as a helical segment; it reads LVGFFIAMLALMAVLYVHML. The Cytoplasmic segment spans residues 212–240; that stretch reads ARACQHARGIARLQKRQRPIHRGFGLKGA. The chain crosses the membrane as a helical span at residues 241–266; that stretch reads ATLTILLGVFFLCWGPFFLHLSLIVL. Residues 267–279 are Extracellular-facing; the sequence is CPQHPTCGCIFKN. A helical transmembrane segment spans residues 280 to 300; sequence FNLFLALIICNAIVDPLIYAF. The Cytoplasmic portion of the chain corresponds to 301-317; that stretch reads RSQELRKTLQEVLQCSW. Cys315 carries S-palmitoyl cysteine lipidation.

It belongs to the G-protein coupled receptor 1 family. In terms of assembly, interacts with MGRN1, but does not undergo MGRN1-mediated ubiquitination; this interaction competes with GNAS-binding and thus inhibits agonist-induced cAMP production. Interacts with OPN3; the interaction results in a decrease in MC1R-mediated cAMP signaling and ultimately a decrease in melanin production in melanocytes.

The protein resides in the cell membrane. Receptor for MSH (alpha, beta and gamma) and ACTH. The activity of this receptor is mediated by G proteins which activate adenylate cyclase. Mediates melanogenesis, the production of eumelanin (black/brown) and phaeomelanin (red/yellow), via regulation of cAMP signaling in melanocytes. The sequence is that of Melanocyte-stimulating hormone receptor (MC1R) from Rangifer tarandus (Reindeer).